The following is a 570-amino-acid chain: Auxin efflux carrier component 6 (570 aa).

At 1–6 (MITGNE) the chain is on the extracellular side. Residues 7–27 (FYTVMCAMAPLYFAMFVAYGS) traverse the membrane as a helical segment. Over 28-38 (VKWCKIFTPAQ) the chain is Cytoplasmic. The helical transmembrane segment at 39 to 59 (CSGINRFVSVFAVPVLSFHFI) threads the bilayer. Residue valine 51 coordinates (indol-3-yl)acetate. Topologically, residues 60–70 (SQNNPYKMDTM) are extracellular. The helical transmembrane segment at 71-91 (FILADTLSKIFVFVLLSLWAV) threads the bilayer. The Cytoplasmic portion of the chain corresponds to 92–100 (FFKAGGLDW). Residues 101-121 (LITLFSIATLPNTLVMGIPLL) form a helical membrane-spanning segment. 2 residues coordinate (indol-3-yl)acetate: asparagine 112 and leucine 114. Over 122–131 (QAMYGDYTQT) the chain is Extracellular. Residues 132–152 (LMVQLVVLQCIIWYTLLLFLF) traverse the membrane as a helical segment. (indol-3-yl)acetate is bound at residue tyrosine 145. Residues 153–430 (ELRAARLLIR…LSRNPNTYSS (278 aa)) lie on the Cytoplasmic side of the membrane. 2 positions are modified to phosphoserine: serine 230 and serine 308. The chain crosses the membrane as a helical span at residues 431–451 (LLGLVWSLISFKWNIPMPNIV). Residues 452 to 454 (DFS) are Extracellular-facing. The chain crosses the membrane as a helical span at residues 455–475 (IKIISDAGLGMAMFSLGLFMA). Topologically, residues 476–491 (LQPKMIPCGAKKATMG) are cytoplasmic. Residues 492 to 512 (MLIRFISGPLFMAGASLLVGL) form a helical membrane-spanning segment. Residues 513-515 (RGS) lie on the Extracellular side of the membrane. Residues 516 to 536 (RLHAAIVQAALPQGIVPFVFA) traverse the membrane as a helical segment. (indol-3-yl)acetate-binding residues include isoleucine 530 and valine 531. Topologically, residues 537–549 (REYNLHPDLLSTL) are cytoplasmic. A helical transmembrane segment spans residues 550-570 (VIFGMIVSLPVTILYYVLLGL).

Belongs to the auxin efflux carrier (TC 2.A.69.1) family. As to quaternary structure, homodimer. As to expression, expressed in the vasculature of the primary root, cotyledons, floral stem, sepals and the main transmitting tract of the reproductive silique. Expressed in embryos, shoot meristem, root tip and lateral root meristems. Expressed in the nectaries and the floral organ boundaries of the anthers. Detected in pollen. Expressed in broad subepidermal domains that narrowed to sites of vein formation. Expressed in veins of mature leaves.

The protein localises to the endoplasmic reticulum membrane. Functionally, component of the intracellular auxin-transport pathway. Regulates auxin transport and auxin homeostasis. Directly involved in the regulation of nectar production. Involved in unfolded protein response (UPR) activation. Involved in the control of vein patterning. Redundantly with PIN8, inhibits the vein-formation-promoting functions of PIN5. PIN5, PIN6, and PIN8 control vein network geometry, but they are expressed in mutually exclusive domains of leaf vascular cells. The polypeptide is Auxin efflux carrier component 6 (Arabidopsis thaliana (Mouse-ear cress)).